We begin with the raw amino-acid sequence, 254 residues long: Nickel import ATP-binding protein NikD (254 aa).

Positions 2–241 (PQQIELRNIA…PKHTVTRSLV (240 aa)) constitute an ABC transporter domain. 36–43 (GGSGSGKS) lines the ATP pocket.

It belongs to the ABC transporter superfamily. Nickel importer (TC 3.A.1.5.3) family. In terms of assembly, the complex is composed of two ATP-binding proteins (NikD and NikE), two transmembrane proteins (NikB and NikC) and a solute-binding protein (NikA).

It localises to the cell inner membrane. The catalysed reaction is Ni(2+)(out) + ATP + H2O = Ni(2+)(in) + ADP + phosphate + H(+). In terms of biological role, part of the ABC transporter complex NikABCDE involved in nickel import. Responsible for energy coupling to the transport system. This Shigella flexneri serotype 5b (strain 8401) protein is Nickel import ATP-binding protein NikD.